Consider the following 2021-residue polypeptide: Fanconi anemia group M protein homolog (2021 aa).

Ser-30 bears the Phosphoserine mark. Residues 86–254 enclose the Helicase ATP-binding domain; sequence ISRSALFCNT…QVITNLLIGK (169 aa). ATP is bound at residue 99–106; that stretch reads LPTGLGKT. The DEAH box signature appears at 202-205; that stretch reads DEAH. In terms of domain architecture, Helicase C-terminal spans 437 to 612; the sequence is KLEEVILEHF…VLRLYQGSPR (176 aa). Disordered regions lie at residues 638–657, 837–886, 1002–1049, 1244–1273, 1296–1319, 1369–1441, 1447–1466, 1615–1700, and 1712–1732; these read RSVQRRPFSSRGGIKASKSN, PCRA…RMAD, CSPY…LPGT, GAADVSGRHSDKEIKDAGGASGPLGRAISP, ASSSPVKQRVRSTPLSKSHASSKT, PRRT…RTCP, KGRNRNIRKGSAAQKNRSQV, NKKQ…QPSI, and AQSHNKIKSASPPCTGVESRK. The segment covering 1018 to 1035 has biased composition (polar residues); that stretch reads ASHSAGNSQQNLESNSAK. The span at 1249-1259 shows a compositional bias: basic and acidic residues; the sequence is SGRHSDKEIKD. The span at 1370-1379 shows a compositional bias: basic and acidic residues; the sequence is RRTEVEHLTS. Positions 1388-1397 are enriched in basic residues; sequence RKTKKPKRNV. Phosphoserine is present on Ser-1637. Residues 1669–1682 are compositionally biased toward low complexity; it reads SGPSGSSVPPQVLS. Positions 1684–1700 are enriched in polar residues; the sequence is PSWNQSSRQRLQVQPSI. The tract at residues 1689-2009 is interaction with FAAP24; that stretch reads SSRQRLQVQP…LNQERQKPDT (321 aa).

This sequence belongs to the DEAD box helicase family. DEAH subfamily. FANCM sub-subfamily. As to quaternary structure, component of the Fanconi anemia (FA) core complex, which consists of CENPS, CENPX, FANCA, FANCB, FANCC, FANCE, FANCF, FANCG, FANCL, FANCM, FAAP24 and FAAP100. The FA core complex associates with Bloom syndrome (BLM) complex, which consists of at least BLM, DNA topoisomerase 3-alpha/TOP3A, RMI1/BLAP75, RPA1/RPA70 and RPA2/RPA32. This supercomplex between FA and BLM complexes has been called BRAFT. Forms a discrete complex with CENPS and CENPX, called FANCM-MHF; this interaction stimulates DNA binding and replication fork remodeling by FANCM and stabilizes the binding partners. Forms a heterodimer with FAAP24; this interaction increases FANCM single-stranded DNA-binding activity. In terms of processing, phosphorylated; hyperphosphorylated in response to genotoxic stress.

It localises to the nucleus. The enzyme catalyses ATP + H2O = ADP + phosphate + H(+). In terms of biological role, DNA-dependent ATPase component of the Fanconi anemia (FA) core complex. Required for the normal activation of the FA pathway, leading to monoubiquitination of the FANCI-FANCD2 complex in response to DNA damage, cellular resistance to DNA cross-linking drugs, and prevention of chromosomal breakage. In complex with CENPS and CENPX, binds double-stranded DNA (dsDNA), fork-structured DNA (fsDNA) and Holliday junction substrates. Its ATP-dependent DNA branch migration activity can process branched DNA structures such as a movable replication fork. This activity is strongly stimulated in the presence of CENPS and CENPX. In complex with FAAP24, efficiently binds to single-strand DNA (ssDNA), splayed-arm DNA, and 3'-flap substrates. In vitro, on its own, strongly binds ssDNA oligomers and weakly fsDNA, but does not bind to dsDNA. This is Fanconi anemia group M protein homolog (Fancm) from Mus musculus (Mouse).